Consider the following 51-residue polypeptide: rpoE leader peptide (51 aa).

A short protein whose stop codon overlaps with the start codon of downstream rpoE; a premature stop codon at position 12 results in decreased expression of ECF sigma factor RpoE, thus they are translationally coupled. This is rpoE leader peptide from Escherichia coli (strain K12).